A 258-amino-acid chain; its full sequence is Phosphonates import ATP-binding protein PhnC 1 (258 aa).

The 245-residue stretch at 2–246 (IEFKDVGLVY…TFEEIYGRSI (245 aa)) folds into the ABC transporter domain. 35 to 42 (GLSGAGKS) contributes to the ATP binding site.

Belongs to the ABC transporter superfamily. Phosphonates importer (TC 3.A.1.9.1) family. The complex is composed of two ATP-binding proteins (PhnC), two transmembrane proteins (PhnE) and a solute-binding protein (PhnD).

Its subcellular location is the cell membrane. It carries out the reaction phosphonate(out) + ATP + H2O = phosphonate(in) + ADP + phosphate + H(+). Its function is as follows. Part of the ABC transporter complex PhnCDE involved in phosphonates import. Responsible for energy coupling to the transport system. This is Phosphonates import ATP-binding protein PhnC 1 from Oceanobacillus iheyensis (strain DSM 14371 / CIP 107618 / JCM 11309 / KCTC 3954 / HTE831).